A 154-amino-acid chain; its full sequence is Iron-sulfur cluster assembly 2 homolog, mitochondrial (154 aa).

The N-terminal 8 residues, 1 to 8, are a transit peptide targeting the mitochondrion; that stretch reads MAAAWGSS. A disordered region spans residues 29 to 49; sequence SLGPQARREASSSSPEAGEGQ. Residues 39 to 49 show a composition bias toward low complexity; sequence SSSSPEAGEGQ. Residues C79, C144, and C146 each coordinate Fe cation.

It belongs to the HesB/IscA family. As to quaternary structure, heterotetramer; forms a dimer of dimers with IBA57. Interacts with [2Fe-2S]-ISCA2 forming the heterodimer [2Fe- 2S]-ISCA2-IBA57 complex; [2Fe-2S] cluster binding is absolutely required to promote the complex formation.

The protein localises to the mitochondrion. Functionally, involved in the maturation of mitochondrial 4Fe-4S proteins functioning late in the iron-sulfur cluster assembly pathway. May be involved in the binding of an intermediate of Fe/S cluster assembly. The polypeptide is Iron-sulfur cluster assembly 2 homolog, mitochondrial (ISCA2) (Homo sapiens (Human)).